Consider the following 415-residue polypeptide: Esterase FrsA (415 aa).

The protein belongs to the FrsA family.

The catalysed reaction is a carboxylic ester + H2O = an alcohol + a carboxylate + H(+). In terms of biological role, catalyzes the hydrolysis of esters. The sequence is that of Esterase FrsA from Vibrio parahaemolyticus serotype O3:K6 (strain RIMD 2210633).